A 694-amino-acid chain; its full sequence is Soluble starch synthase 2-2, chloroplastic/amyloplastic (694 aa).

A chloroplast-targeting transit peptide spans 1-15 (MSGAIASSPAATLFL). Positions 93–197 (KADHVEDSVS…DSENKESGPL (105 aa)) are disordered. Over residues 127–142 (APVSKPKVDPSVPASK) the composition is skewed to low complexity. Positions 156 to 176 (AALDKKEDVGVAEPLEAKADA) are enriched in basic and acidic residues. The segment covering 177 to 186 (GGDAGAVSSA) has biased composition (low complexity). Lys-217 contributes to the ADP-alpha-D-glucose binding site.

It belongs to the glycosyltransferase 1 family. Bacterial/plant glycogen synthase subfamily. In terms of tissue distribution, expressed in leaves and weakly in endosperm and roots.

Its subcellular location is the plastid. It localises to the amyloplast. The protein resides in the chloroplast. The catalysed reaction is [(1-&gt;4)-alpha-D-glucosyl](n) + ADP-alpha-D-glucose = [(1-&gt;4)-alpha-D-glucosyl](n+1) + ADP + H(+). It participates in glycan biosynthesis; starch biosynthesis. Functionally, may contribute to the deposition of transient starch in chloroplasts of leaves. The sequence is that of Soluble starch synthase 2-2, chloroplastic/amyloplastic (SSII-2) from Oryza sativa subsp. japonica (Rice).